A 259-amino-acid polypeptide reads, in one-letter code: Thiazole synthase (259 aa).

The active-site Schiff-base intermediate with DXP is the K98. 1-deoxy-D-xylulose 5-phosphate-binding positions include G159, 185 to 186 (AG), and 207 to 208 (NS).

It belongs to the ThiG family. In terms of assembly, homotetramer. Forms heterodimers with either ThiH or ThiS.

It is found in the cytoplasm. The catalysed reaction is [ThiS sulfur-carrier protein]-C-terminal-Gly-aminoethanethioate + 2-iminoacetate + 1-deoxy-D-xylulose 5-phosphate = [ThiS sulfur-carrier protein]-C-terminal Gly-Gly + 2-[(2R,5Z)-2-carboxy-4-methylthiazol-5(2H)-ylidene]ethyl phosphate + 2 H2O + H(+). The protein operates within cofactor biosynthesis; thiamine diphosphate biosynthesis. Catalyzes the rearrangement of 1-deoxy-D-xylulose 5-phosphate (DXP) to produce the thiazole phosphate moiety of thiamine. Sulfur is provided by the thiocarboxylate moiety of the carrier protein ThiS. In vitro, sulfur can be provided by H(2)S. In Chlorobium phaeobacteroides (strain BS1), this protein is Thiazole synthase.